Here is a 201-residue protein sequence, read N- to C-terminus: MEKLTPRQQMVLAFISAHLESHGYPPTLREIGGHLGINGTLGVMKHLDALERKGFITRNAGSSRGIVLVGAVAATSIPIVGVVRAGALQPAIEDIEGYFAVDRALVKGADCFFLRVKGDSMIEAGIRSGDLALVRPQATADNGDIVVARINDEATLKRFFREKDRIRLQPENSAMEPIIVKAKAGEVNIIGKVTGIFRSLE.

Positions 28-48 form a DNA-binding region, H-T-H motif; that stretch reads LREIGGHLGINGTLGVMKHLD. Catalysis depends on for autocatalytic cleavage activity residues S120 and K157.

It belongs to the peptidase S24 family. As to quaternary structure, homodimer.

The catalysed reaction is Hydrolysis of Ala-|-Gly bond in repressor LexA.. Represses a number of genes involved in the response to DNA damage (SOS response), including recA and lexA. In the presence of single-stranded DNA, RecA interacts with LexA causing an autocatalytic cleavage which disrupts the DNA-binding part of LexA, leading to derepression of the SOS regulon and eventually DNA repair. In Geotalea uraniireducens (strain Rf4) (Geobacter uraniireducens), this protein is LexA repressor.